A 546-amino-acid chain; its full sequence is Chaperonin GroEL (546 aa).

Residues 30–33 (TLGP), Lys51, 87–91 (DGTTT), Gly415, 479–481 (NAA), and Asp495 contribute to the ATP site.

It belongs to the chaperonin (HSP60) family. As to quaternary structure, forms a cylinder of 14 subunits composed of two heptameric rings stacked back-to-back. Interacts with the co-chaperonin GroES.

The protein localises to the cytoplasm. It catalyses the reaction ATP + H2O + a folded polypeptide = ADP + phosphate + an unfolded polypeptide.. Functionally, together with its co-chaperonin GroES, plays an essential role in assisting protein folding. The GroEL-GroES system forms a nano-cage that allows encapsulation of the non-native substrate proteins and provides a physical environment optimized to promote and accelerate protein folding. This Azotobacter vinelandii protein is Chaperonin GroEL.